We begin with the raw amino-acid sequence, 65 residues long: Cold shock-like protein CspB (65 aa).

Residues 3 to 62 enclose the CSD domain; sequence GKVKWFNNEKGFGFIEMEGSEDVFVHFSAIQSDGYKALEEGQEVSFDITEGNRGPQAANV.

Homodimer.

The protein resides in the cytoplasm. The chain is Cold shock-like protein CspB (cspB) from Bacillus cereus.